Consider the following 180-residue polypeptide: UPF0227 protein YcfP (180 aa).

The protein belongs to the UPF0227 family.

This chain is UPF0227 protein YcfP, found in Salmonella gallinarum (strain 287/91 / NCTC 13346).